The sequence spans 153 residues: Large ribosomal subunit protein uL15 (153 aa).

Residues 1–42 (MRLNTIKPGMGSTKPRRRVGRGIGSGLGKTCGRGHKGQKSRA) are disordered. The segment covering 21–31 (RGIGSGLGKTC) has biased composition (gly residues).

Belongs to the universal ribosomal protein uL15 family. In terms of assembly, part of the 50S ribosomal subunit.

Its function is as follows. Binds to the 23S rRNA. This is Large ribosomal subunit protein uL15 from Nitrosomonas eutropha (strain DSM 101675 / C91 / Nm57).